Consider the following 437-residue polypeptide: Protein farnesyltransferase subunit beta (437 aa).

PFTB repeat units lie at residues 123–164 (ATDV…CIIG), 174–215 (REKL…SLTN), 222–263 (FEGT…VILK), 270–312 (LKSL…PLLH), and 332–374 (QQAL…SIAQ). (2E,6E)-farnesyl diphosphate contacts are provided by residues 248-251 (HGGY) and 291-294 (RCNK). Zn(2+) is bound by residues aspartate 297 and cysteine 299. Residue 300-303 (YSFW) coordinates (2E,6E)-farnesyl diphosphate. A Zn(2+)-binding site is contributed by histidine 362. Position 432 is a phosphoserine (serine 432). A Phosphothreonine modification is found at threonine 436.

This sequence belongs to the protein prenyltransferase subunit beta family. As to quaternary structure, heterodimer of FNTA and FNTB. Zn(2+) serves as cofactor.

The enzyme catalyses L-cysteinyl-[protein] + (2E,6E)-farnesyl diphosphate = S-(2E,6E)-farnesyl-L-cysteinyl-[protein] + diphosphate. In terms of biological role, essential subunit of the farnesyltransferase complex. Catalyzes the transfer of a farnesyl moiety from farnesyl diphosphate to a cysteine at the fourth position from the C-terminus of several proteins having the C-terminal sequence Cys-aliphatic-aliphatic-X. This chain is Protein farnesyltransferase subunit beta (Fntb), found in Rattus norvegicus (Rat).